A 320-amino-acid chain; its full sequence is tRNA pseudouridine synthase B (320 aa).

The active-site Nucleophile is the aspartate 41. Disordered stretches follow at residues proline 116–glycine 136 and aspartate 259–alanine 284. Basic and acidic residues predominate over residues glutamine 125–glycine 136. Polar residues predominate over residues serine 270–alanine 284.

This sequence belongs to the pseudouridine synthase TruB family. Type 1 subfamily.

It carries out the reaction uridine(55) in tRNA = pseudouridine(55) in tRNA. Functionally, responsible for synthesis of pseudouridine from uracil-55 in the psi GC loop of transfer RNAs. This Prochlorococcus marinus (strain MIT 9313) protein is tRNA pseudouridine synthase B.